Consider the following 275-residue polypeptide: Membrane protein insertase YidC 2 (275 aa).

The signal sequence occupies residues 1 to 21; the sequence is MKKKNIILISVLLGALLLLTG. The N-palmitoyl cysteine moiety is linked to residue Cys-22. The S-diacylglycerol cysteine moiety is linked to residue Cys-22. 4 consecutive transmembrane segments (helical) span residues 48 to 68, 133 to 153, 174 to 194, and 212 to 232; these read FVAK…TLLI, QMGC…YYAI, MVLA…SMIG, and IMIL…WAVG.

This sequence belongs to the OXA1/ALB3/YidC family. Type 2 subfamily.

The protein resides in the cell membrane. Required for the insertion and/or proper folding and/or complex formation of integral membrane proteins into the membrane. Involved in integration of membrane proteins that insert both dependently and independently of the Sec translocase complex, as well as at least some lipoproteins. This chain is Membrane protein insertase YidC 2, found in Listeria monocytogenes serotype 4b (strain F2365).